The following is a 785-amino-acid chain: Conserved oligomeric Golgi complex subunit 4 (785 aa).

A disordered region spans residues 1–24; that stretch reads MADLDSPPKLSGVQQPSEGVGGGR. Residue Ala-2 is modified to N-acetylalanine. An interaction with SCFD1 region spans residues 2–84; it reads ADLDSPPKLS…VTLHRMGPNL (83 aa). At Ser-6 the chain carries Phosphoserine. The segment at 85–153 is interaction with STX5; the sequence is QLIEGDAKQL…TALRSEDYEQ (69 aa). Residues 618–740 form a d domain region; sequence PQVQPWINSF…SQMATILNLE (123 aa). An e domain; essential for proper cell surface glycosylation region spans residues 741 to 785; it reads RVTEILDYWGPNSGPLTWRLTPAEVRQVLALRIDFRSEDIKRLRL.

It belongs to the COG4 family. Monomer. Component of the conserved oligomeric Golgi (COG) complex which is composed of eight different subunits and is required for normal Golgi morphology and localization. Mediates interaction of SCFD1 with the COG complex. Interacts with STX5.

It is found in the cytoplasm. It localises to the cytosol. The protein localises to the golgi apparatus membrane. In terms of biological role, required for normal Golgi function. Plays a role in SNARE-pin assembly and Golgi-to-ER retrograde transport via its interaction with SCFD1. This chain is Conserved oligomeric Golgi complex subunit 4 (COG4), found in Homo sapiens (Human).